We begin with the raw amino-acid sequence, 372 residues long: GDSL esterase/lipase At5g45910 (372 aa).

Residues methionine 1 to serine 19 form the signal peptide. Catalysis depends on serine 37, which acts as the Nucleophile. 3 N-linked (GlcNAc...) asparagine glycosylation sites follow: asparagine 66, asparagine 101, and asparagine 137. Active-site residues include aspartate 345 and histidine 348.

The protein belongs to the 'GDSL' lipolytic enzyme family.

It is found in the secreted. This chain is GDSL esterase/lipase At5g45910, found in Arabidopsis thaliana (Mouse-ear cress).